The primary structure comprises 269 residues: Expansin-B9 (269 aa).

Residues 1-24 (MGSLANNIMVVGAVLAALVVGGSC) form the signal peptide. Asn-34 is a glycosylation site (N-linked (GlcNAc...) asparagine). The Expansin-like EG45 domain maps to 63–169 (GGACGIKNVN…RRVRCKYPAG (107 aa)). 3 disulfide bridges follow: Cys-66–Cys-94, Cys-97–Cys-164, and Cys-102–Cys-108. One can recognise an Expansin-like CBD domain in the interval 183–264 (NYVAVLVKFV…NWRPDAVYTS (82 aa)).

This sequence belongs to the expansin family. Expansin B subfamily. As to expression, expressed in anthers and pollen.

Its subcellular location is the secreted. The protein resides in the cell wall. The protein localises to the membrane. Its function is as follows. May aid fertilization by loosening the cell wall of the stigma and style, thereby facilitating penetration of the pollen tube. Acts selectively on grass cell walls, which are relatively poor in pectins and xyloglucans and rich in glucuronoarabinoxylans and (1-3),(1-4)-beta-D-glucans, when compared with cell walls of other angiosperms, including other monocots. The sequence is that of Expansin-B9 (EXPB9) from Zea mays (Maize).